Reading from the N-terminus, the 98-residue chain is Putative septation protein SpoVG (98 aa).

Belongs to the SpoVG family.

In terms of biological role, essential for sporulation. Interferes with or is a negative regulator of the pathway leading to asymmetric septation. The chain is Putative septation protein SpoVG from Shouchella clausii (strain KSM-K16) (Alkalihalobacillus clausii).